Here is an 831-residue protein sequence, read N- to C-terminus: MLQSLKNVFFSETTTTTTTSTTTPVSNSAIKRYIGNINDYKNANYFNYYRILENKYDYLRDTFGLKTFSNNETFKLIDFTIDSEMNNTCITSIWNQKYSNNSSIPVEGIYKIPLAPYSVISGFTVEYQDKVFIGKIKSKEKAQNQYSDSIASGGQAFLAEKTQDGQFSFRIGNLPPNENVTIHLTIISGVCPHLSSLQNCFHRFLFPNYSFNFQFNLNIKLTLPIKTIELLYYPNREIKFKENSNNKEATLTFSSKNGIDSDIVCIVEPENDIERPQSIIEHSKLNNTYAVSVNFTPSFSHLTSDDVNQKSEFIFLIDCSGSMSGEPIKKAKRALEIIIRSLNENCKFNIYCFGSRFTKAFDNSKMYNDETLAQISGYVEKIDADLGGTELLPPIRDILSTESDFEYPRQLFILTDGEVSERDSLINYVATESNNTRIFTYGIGNSVDTELVIGLSKACKGYYEMIKDNSNFEEQVMKLVSIAFEPTLSNIKVDWGTELQIEQGPTKIRPLYSGETLIVYALLKDNKIPQSTVQVSLIGDGPTGSKLEFPITLDFSKTIDYENNSVHTLAAFNIIKDLEEVERKGNHSNNRDRIEELGKSYGLISKYTSYIVTAASEQVTEETMKTLNIIQTPTTTTTTSHSNRRREEADHTMNQTLLKNCAVVDDLFESCEMLSETSIKFECNRVYKKIPSSLSKIFSFFSSLSTSSSVRSEVVSNFDNDIESEEKKNNSINNNSDSLLKLIKLQKANGSWSSPFSEFKIDLSKKPSNIDSDDIWITLIVINKILNDYPTQQSQYDLVIQKASKWVKQQLTRLNIPNQYGSLLATSKLHI.

In terms of domain architecture, VIT spans 60 to 188 (RDTFGLKTFS…NVTIHLTIIS (129 aa)). The VWFA domain occupies 312–480 (EFIFLIDCSG…NFEEQVMKLV (169 aa)).

This chain is von Willebrand factor A domain-containing protein DDB_G0285981, found in Dictyostelium discoideum (Social amoeba).